The sequence spans 364 residues: tRNA 2-selenouridine synthase (364 aa).

Residues 14-137 (LIADTPIIDV…LRQTTIQATI (124 aa)) enclose the Rhodanese domain. Catalysis depends on Cys97, which acts as the S-selanylcysteine intermediate.

The protein belongs to the SelU family. In terms of assembly, monomer.

The catalysed reaction is 5-methylaminomethyl-2-thiouridine(34) in tRNA + selenophosphate + (2E)-geranyl diphosphate + H2O + H(+) = 5-methylaminomethyl-2-selenouridine(34) in tRNA + (2E)-thiogeraniol + phosphate + diphosphate. The enzyme catalyses 5-methylaminomethyl-2-thiouridine(34) in tRNA + (2E)-geranyl diphosphate = 5-methylaminomethyl-S-(2E)-geranyl-thiouridine(34) in tRNA + diphosphate. It catalyses the reaction 5-methylaminomethyl-S-(2E)-geranyl-thiouridine(34) in tRNA + selenophosphate + H(+) = 5-methylaminomethyl-2-(Se-phospho)selenouridine(34) in tRNA + (2E)-thiogeraniol. It carries out the reaction 5-methylaminomethyl-2-(Se-phospho)selenouridine(34) in tRNA + H2O = 5-methylaminomethyl-2-selenouridine(34) in tRNA + phosphate. In terms of biological role, involved in the post-transcriptional modification of the uridine at the wobble position (U34) of tRNA(Lys), tRNA(Glu) and tRNA(Gln). Catalyzes the conversion of 2-thiouridine (S2U-RNA) to 2-selenouridine (Se2U-RNA). Acts in a two-step process involving geranylation of 2-thiouridine (S2U) to S-geranyl-2-thiouridine (geS2U) and subsequent selenation of the latter derivative to 2-selenouridine (Se2U) in the tRNA chain. This chain is tRNA 2-selenouridine synthase, found in Escherichia coli O8 (strain IAI1).